Reading from the N-terminus, the 153-residue chain is SsrA-binding protein (153 aa).

It belongs to the SmpB family.

The protein localises to the cytoplasm. In terms of biological role, required for rescue of stalled ribosomes mediated by trans-translation. Binds to transfer-messenger RNA (tmRNA), required for stable association of tmRNA with ribosomes. tmRNA and SmpB together mimic tRNA shape, replacing the anticodon stem-loop with SmpB. tmRNA is encoded by the ssrA gene; the 2 termini fold to resemble tRNA(Ala) and it encodes a 'tag peptide', a short internal open reading frame. During trans-translation Ala-aminoacylated tmRNA acts like a tRNA, entering the A-site of stalled ribosomes, displacing the stalled mRNA. The ribosome then switches to translate the ORF on the tmRNA; the nascent peptide is terminated with the 'tag peptide' encoded by the tmRNA and targeted for degradation. The ribosome is freed to recommence translation, which seems to be the essential function of trans-translation. In Cytophaga hutchinsonii (strain ATCC 33406 / DSM 1761 / CIP 103989 / NBRC 15051 / NCIMB 9469 / D465), this protein is SsrA-binding protein.